Consider the following 317-residue polypeptide: Protein-L-isoaspartate O-methyltransferase (317 aa).

S59 is a catalytic residue.

Belongs to the methyltransferase superfamily. L-isoaspartyl/D-aspartyl protein methyltransferase family. As to quaternary structure, monomer.

It is found in the cytoplasm. It catalyses the reaction [protein]-L-isoaspartate + S-adenosyl-L-methionine = [protein]-L-isoaspartate alpha-methyl ester + S-adenosyl-L-homocysteine. Functionally, catalyzes the methyl esterification of L-isoaspartyl residues in peptides and proteins that result from spontaneous decomposition of normal L-aspartyl and L-asparaginyl residues. It plays a role in the repair and/or degradation of damaged proteins. The protein is Protein-L-isoaspartate O-methyltransferase (pcm) of Thermotoga maritima (strain ATCC 43589 / DSM 3109 / JCM 10099 / NBRC 100826 / MSB8).